The sequence spans 171 residues: Large ribosomal subunit protein uL10 (171 aa).

The protein belongs to the universal ribosomal protein uL10 family. As to quaternary structure, part of the ribosomal stalk of the 50S ribosomal subunit. The N-terminus interacts with L11 and the large rRNA to form the base of the stalk. The C-terminus forms an elongated spine to which L12 dimers bind in a sequential fashion forming a multimeric L10(L12)X complex.

Functionally, forms part of the ribosomal stalk, playing a central role in the interaction of the ribosome with GTP-bound translation factors. This is Large ribosomal subunit protein uL10 from Erythrobacter litoralis (strain HTCC2594).